The sequence spans 303 residues: uncharacterized protein (303 aa).

The next 4 membrane-spanning stretches (helical) occupy residues 102-122 (TYLL…VMAI), 132-152 (FVLF…FLFF), 184-204 (LLYF…SLIY), and 221-241 (FILL…FLLF).

It localises to the membrane. This is an uncharacterized protein from Dictyostelium discoideum (Social amoeba).